A 396-amino-acid chain; its full sequence is MEQTWRWYGPNDPVSLDDVRQAGATGVVTALHHIPNGEVWPIEEIKARQALLAEKGLVWSVVESIPVHEEIKTHSGNYQQHIAHYQQSLRNLAACGIDTVCYNFMPILDWTRTDLEYLLPDGSKALRFDQIAFAAFDLHILQRAGAEQDYTQEEQQQAAARFAAMSEADIAKLTGNIIAGLPGAEEGYTLDQFRARLAEYDAIDKAQLRENMAVFLRAIVPVAEEVGVRLAVHPDDPPRPLLGLPRIVSTIEDMQWFKQTVDSLHNGFTMCTGSYGVREDNDLVRMIETFGDRIHFTHLRATCREDNPKSFHEGAHLQGDVDMVAVIEAILSEEQRRHQTGDTRPIPMRPDHGHQMLDDLKKKTNPGYSAIGRLKGLAELRGVELALKRRFFPELP.

It belongs to the mannonate dehydratase family. It depends on Fe(2+) as a cofactor. Mn(2+) serves as cofactor.

It carries out the reaction D-mannonate = 2-dehydro-3-deoxy-D-gluconate + H2O. The protein operates within carbohydrate metabolism; pentose and glucuronate interconversion. Functionally, catalyzes the dehydration of D-mannonate. The polypeptide is Mannonate dehydratase (Serratia proteamaculans (strain 568)).